A 288-amino-acid polypeptide reads, in one-letter code: Small ribosomal subunit biogenesis GTPase RsgA (288 aa).

In terms of domain architecture, CP-type G spans 61–218; it reads TNKLIRPPVS…IVDTPGFSSL (158 aa). GTP-binding positions include 110 to 113 and 161 to 169; these read NKID and GPSGVGKST. Residues cysteine 242, cysteine 247, histidine 249, and cysteine 255 each contribute to the Zn(2+) site.

Belongs to the TRAFAC class YlqF/YawG GTPase family. RsgA subfamily. As to quaternary structure, monomer. Associates with 30S ribosomal subunit, binds 16S rRNA. Zn(2+) is required as a cofactor.

It localises to the cytoplasm. Functionally, one of several proteins that assist in the late maturation steps of the functional core of the 30S ribosomal subunit. Helps release RbfA from mature subunits. May play a role in the assembly of ribosomal proteins into the subunit. Circularly permuted GTPase that catalyzes slow GTP hydrolysis, GTPase activity is stimulated by the 30S ribosomal subunit. This Clostridium acetobutylicum (strain ATCC 824 / DSM 792 / JCM 1419 / IAM 19013 / LMG 5710 / NBRC 13948 / NRRL B-527 / VKM B-1787 / 2291 / W) protein is Small ribosomal subunit biogenesis GTPase RsgA.